Consider the following 320-residue polypeptide: MAAAAAAAAATEQQSSNGPVKKSMREKAVERRNVNKEHNSNFKAGYIPIDEDRLHKTGLRGRKGNLAICVIVLLFILAVINLLITLVIWAVIRIGPNGCDSMEFHESGLLRFKQVSDMGVIHPLYKSTVGGRRNENLVITGNNQPIVFQQGTTKLSVEKNKTSITSDIGMQFFDPRTQNILFSTDYETHEFHLPSGVKSLNVQKASTERITSNATSDLNIKVDGRAIVRGNEGVFIMGKTIEFHMGGNVELKAENSIILNGTVMVSPTRLPSSSSGDQSGGGDWVRYKLCMCADGTLFKVQVTGHNMGCQVADNPCGNTH.

Positions 1–10 are enriched in low complexity; sequence MAAAAAAAAA. The disordered stretch occupies residues 1–34; it reads MAAAAAAAAATEQQSSNGPVKKSMREKAVERRNV. At 1–67 the chain is on the cytoplasmic side; that stretch reads MAAAAAAAAA…GLRGRKGNLA (67 aa). Residues 23–34 show a composition bias toward basic and acidic residues; that stretch reads SMREKAVERRNV. A helical; Signal-anchor for type II membrane protein membrane pass occupies residues 68 to 88; sequence ICVIVLLFILAVINLLITLVI. Topologically, residues 89–320 are extracellular; that stretch reads WAVIRIGPNG…VADNPCGNTH (232 aa). Residues Asn160, Asn213, and Asn260 are each glycosylated (N-linked (GlcNAc...) asparagine). Disulfide bonds link Cys290-Cys316 and Cys292-Cys309.

It belongs to the sarcoglycan beta/delta/gamma/zeta family. In terms of assembly, cross-link to form 2 major subcomplexes: one consisting of SGCB, SGCD and SGCG and the other consisting of SGCB and SGCD. The association between SGCB and SGCG is particularly strong while SGCA is loosely associated with the other sarcoglycans. In terms of processing, disulfide bonds are present.

It is found in the cell membrane. It localises to the sarcolemma. Its subcellular location is the cytoplasm. The protein localises to the cytoskeleton. Component of the sarcoglycan complex, a subcomplex of the dystrophin-glycoprotein complex which forms a link between the F-actin cytoskeleton and the extracellular matrix. This chain is Beta-sarcoglycan (SGCB), found in Mesocricetus auratus (Golden hamster).